A 248-amino-acid polypeptide reads, in one-letter code: uncharacterized protein (248 aa).

Positions 33 to 57 (EWQLSEGQKRCEEINRQNRQLRVEK) form a coiled coil.

This is an uncharacterized protein from Escherichia coli (strain K12).